A 399-amino-acid chain; its full sequence is Ribose-phosphate pyrophosphokinase 2, chloroplastic (399 aa).

The N-terminal 32 residues, 1–32 (MAAKAAALSSSPFVSSRRLSSPAASLRARTPR), are a transit peptide targeting the chloroplast. Residues Asp-214, His-216, Asp-225, and Asp-229 each coordinate Mg(2+). The tract at residues 299–314 (GKVAIMVDDMIDTAGT) is binding of phosphoribosylpyrophosphate.

It belongs to the ribose-phosphate pyrophosphokinase family. The cofactor is Mg(2+).

It localises to the plastid. It is found in the chloroplast. It carries out the reaction D-ribose 5-phosphate + ATP = 5-phospho-alpha-D-ribose 1-diphosphate + AMP + H(+). This Oryza sativa subsp. japonica (Rice) protein is Ribose-phosphate pyrophosphokinase 2, chloroplastic.